The chain runs to 81 residues: MTKNTSLTIFMVVLVIGMLYTSIFIKYSDRTCHVYIKAENCEIDQCNWECGTKYKRVGVQGLCVPPGFDPIDQACLCSFNC.

Residues 1 to 21 form the signal peptide; sequence MTKNTSLTIFMVVLVIGMLYT. 4 disulfides stabilise this stretch: cysteine 32–cysteine 81, cysteine 41–cysteine 63, cysteine 46–cysteine 75, and cysteine 50–cysteine 77.

The protein belongs to the DEFL family.

Its subcellular location is the secreted. This chain is Defensin-like protein 130 (LCR28), found in Arabidopsis thaliana (Mouse-ear cress).